Consider the following 122-residue polypeptide: Large ribosomal subunit protein uL14c (122 aa).

This sequence belongs to the universal ribosomal protein uL14 family. In terms of assembly, part of the 50S ribosomal subunit.

It localises to the plastid. The protein localises to the chloroplast. Its function is as follows. Binds to 23S rRNA. In Piper cenocladum (Ant piper), this protein is Large ribosomal subunit protein uL14c.